Reading from the N-terminus, the 152-residue chain is Large ribosomal subunit protein uL22 (152 aa).

The protein belongs to the universal ribosomal protein uL22 family. Part of the 50S ribosomal subunit.

This protein binds specifically to 23S rRNA. It makes multiple contacts with different domains of the 23S rRNA in the assembled 50S subunit and ribosome. Its function is as follows. The globular domain of the protein is located near the polypeptide exit tunnel on the outside of the subunit, while an extended beta-hairpin is found that lines the wall of the exit tunnel in the center of the 70S ribosome. The protein is Large ribosomal subunit protein uL22 of Methanothrix thermoacetophila (strain DSM 6194 / JCM 14653 / NBRC 101360 / PT) (Methanosaeta thermophila).